The following is a 349-amino-acid chain: Alcohol dehydrogenase 1 (349 aa).

The Zn(2+) site is built by cysteine 46, histidine 69, cysteine 100, cysteine 103, cysteine 106, cysteine 114, and cysteine 156. NAD(+) contacts are provided by residues 180–186 (GAGGGLG), aspartate 204, lysine 208, 270–272 (VGL), and arginine 342.

Belongs to the zinc-containing alcohol dehydrogenase family. As to quaternary structure, homotetramer. Zn(2+) serves as cofactor.

It carries out the reaction a primary alcohol + NAD(+) = an aldehyde + NADH + H(+). It catalyses the reaction a secondary alcohol + NAD(+) = a ketone + NADH + H(+). This chain is Alcohol dehydrogenase 1, found in Caenorhabditis elegans.